The chain runs to 156 residues: ATP synthase subunit b (156 aa).

A helical membrane pass occupies residues 11–31 (AIAFVLFVLFCMKYVWPPIMA).

It belongs to the ATPase B chain family. As to quaternary structure, F-type ATPases have 2 components, F(1) - the catalytic core - and F(0) - the membrane proton channel. F(1) has five subunits: alpha(3), beta(3), gamma(1), delta(1), epsilon(1). F(0) has three main subunits: a(1), b(2) and c(10-14). The alpha and beta chains form an alternating ring which encloses part of the gamma chain. F(1) is attached to F(0) by a central stalk formed by the gamma and epsilon chains, while a peripheral stalk is formed by the delta and b chains.

The protein resides in the cell inner membrane. Functionally, f(1)F(0) ATP synthase produces ATP from ADP in the presence of a proton or sodium gradient. F-type ATPases consist of two structural domains, F(1) containing the extramembraneous catalytic core and F(0) containing the membrane proton channel, linked together by a central stalk and a peripheral stalk. During catalysis, ATP synthesis in the catalytic domain of F(1) is coupled via a rotary mechanism of the central stalk subunits to proton translocation. Component of the F(0) channel, it forms part of the peripheral stalk, linking F(1) to F(0). The polypeptide is ATP synthase subunit b (Proteus mirabilis (strain HI4320)).